Here is a 409-residue protein sequence, read N- to C-terminus: Serine/threonine transporter SstT (409 aa).

The next 9 membrane-spanning stretches (helical) occupy residues 14-34 (GSLVLQILVGIIAGIIVATLS), 48-68 (FVGALKAIAPILVFILVAASI), 82-102 (IVILYLFGTFAAAVTAVLMSF), 141-161 (ALMTGNYIGILAWGVGLGLAL), 192-212 (IGIFGLVSSTFASTGFSAIAG), 216-236 (LLLVLLGAMAIMALIINPAIV), 290-310 (IPLGATINMGGAAITITILTL), 322-342 (ILTAILLSVVAGISACGASGV), and 357-377 (FGISNDIAMQVVAVGFIIGVI).

The protein belongs to the dicarboxylate/amino acid:cation symporter (DAACS) (TC 2.A.23) family.

It localises to the cell inner membrane. The enzyme catalyses L-serine(in) + Na(+)(in) = L-serine(out) + Na(+)(out). It catalyses the reaction L-threonine(in) + Na(+)(in) = L-threonine(out) + Na(+)(out). Functionally, involved in the import of serine and threonine into the cell, with the concomitant import of sodium (symport system). The chain is Serine/threonine transporter SstT from Shewanella woodyi (strain ATCC 51908 / MS32).